The following is a 155-amino-acid chain: Probable ribosome biogenesis protein RLP24 (155 aa).

It belongs to the eukaryotic ribosomal protein eL24 family.

This chain is Probable ribosome biogenesis protein RLP24 (RPL24), found in Encephalitozoon cuniculi (strain GB-M1) (Microsporidian parasite).